We begin with the raw amino-acid sequence, 120 residues long: C-C motif chemokine 23 (120 aa).

An N-terminal signal peptide occupies residues 1–21 (MKVSVAALSCLMLVTALGSQA). Intrachain disulfides connect cysteine 54/cysteine 78, cysteine 55/cysteine 94, and cysteine 65/cysteine 105.

This sequence belongs to the intercrine beta (chemokine CC) family. The N-terminal is proteolytically cleaved by proteases associated with inflammatory responses. The processed forms, CCL23(19-99), CCL23(22-99), CCL23(27-99) and CCL23(30-99) exhibit increase in CCR1-mediated signaling and chemotaxis assays in vitro. In terms of tissue distribution, high levels in adult lung, liver, skeletal muscle and pancreas. Moderate levels in fetal liver, adult bone marrow and placenta. The short form is the major species and the longer form was detected only in very low abundance. CCL23(19-99), CCL23(22-99), CCL23(27-99), CCL23(30-99) are found in high levels in synovial fluids from rheumatoid patients.

The protein resides in the secreted. Its function is as follows. Shows chemotactic activity for monocytes, resting T-lymphocytes, and neutrophils, but not for activated lymphocytes. Inhibits proliferation of myeloid progenitor cells in colony formation assays. This protein can bind heparin. Binds CCR1. CCL23(19-99), CCL23(22-99), CCL23(27-99), CCL23(30-99) are more potent chemoattractants than CCL23. The polypeptide is C-C motif chemokine 23 (CCL23) (Homo sapiens (Human)).